We begin with the raw amino-acid sequence, 194 residues long: Probable GTP-binding protein EngB (194 aa).

The region spanning 22–194 (DLPEYALAGR…AWQFIKEGME (173 aa)) is the EngB-type G domain. GTP-binding positions include 30-37 (GRSNVGKS), 57-61 (GKTQT), 75-78 (DVPG), 142-145 (TKAD), and 174-176 (FSS). Positions 37 and 59 each coordinate Mg(2+).

The protein belongs to the TRAFAC class TrmE-Era-EngA-EngB-Septin-like GTPase superfamily. EngB GTPase family. Requires Mg(2+) as cofactor.

Its function is as follows. Necessary for normal cell division and for the maintenance of normal septation. This chain is Probable GTP-binding protein EngB, found in Listeria monocytogenes serovar 1/2a (strain ATCC BAA-679 / EGD-e).